A 234-amino-acid chain; its full sequence is Cytochrome b (234 aa).

4 helical membrane passes run 33–53 (FGSLLGLCLMIQILTGLFLAM), 77–98 (WLIRYLHANGASMFFICLYMHV), 113–133 (WNIGIILLFAVMATAFMGYVL), and 178–198 (FFAFHFILPFIIAALVMIHLL). Heme b-binding residues include His-83 and His-97. Positions 182 and 196 each coordinate heme b. A ubiquinone is bound at residue His-201. Residues 226-234 (IKDLLGFLV) form a helical membrane-spanning segment.

This sequence belongs to the cytochrome b family. The cytochrome bc1 complex contains 11 subunits: 3 respiratory subunits (MT-CYB, CYC1 and UQCRFS1), 2 core proteins (UQCRC1 and UQCRC2) and 6 low-molecular weight proteins (UQCRH/QCR6, UQCRB/QCR7, UQCRQ/QCR8, UQCR10/QCR9, UQCR11/QCR10 and a cleavage product of UQCRFS1). This cytochrome bc1 complex then forms a dimer. It depends on heme b as a cofactor.

It localises to the mitochondrion inner membrane. Its function is as follows. Component of the ubiquinol-cytochrome c reductase complex (complex III or cytochrome b-c1 complex) that is part of the mitochondrial respiratory chain. The b-c1 complex mediates electron transfer from ubiquinol to cytochrome c. Contributes to the generation of a proton gradient across the mitochondrial membrane that is then used for ATP synthesis. This is Cytochrome b (MT-CYB) from Lepus arcticus (Arctic hare).